A 518-amino-acid chain; its full sequence is Chromosomal replication initiator protein DnaA (518 aa).

A domain I, interacts with DnaA modulators region spans residues 1–72 (MTLAEFWPLC…VREELAAGRS (72 aa)). The domain II stretch occupies residues 72–180 (SAFVFKPGEG…DAEEARYEQT (109 aa)). The segment at 145–178 (EPRQAAGSASRPESAAVAKARTDAQRDAEEARYE) is disordered. Residues 164 to 177 (ARTDAQRDAEEARY) are compositionally biased toward basic and acidic residues. Positions 181-397 (NLSPDYTFDT…GAFNRVGASS (217 aa)) are domain III, AAA+ region. Positions 225, 227, 228, and 229 each coordinate ATP. A domain IV, binds dsDNA region spans residues 398 to 518 (RFMNRPVIDI…YEKLLILIQN (121 aa)).

The protein belongs to the DnaA family. As to quaternary structure, oligomerizes as a right-handed, spiral filament on DNA at oriC.

Its subcellular location is the cytoplasm. Plays an essential role in the initiation and regulation of chromosomal replication. ATP-DnaA binds to the origin of replication (oriC) to initiate formation of the DNA replication initiation complex once per cell cycle. Binds the DnaA box (a 9 base pair repeat at the origin) and separates the double-stranded (ds)DNA. Forms a right-handed helical filament on oriC DNA; dsDNA binds to the exterior of the filament while single-stranded (ss)DNA is stabiized in the filament's interior. The ATP-DnaA-oriC complex binds and stabilizes one strand of the AT-rich DNA unwinding element (DUE), permitting loading of DNA polymerase. After initiation quickly degrades to an ADP-DnaA complex that is not apt for DNA replication. Binds acidic phospholipids. The chain is Chromosomal replication initiator protein DnaA from Neisseria meningitidis serogroup A / serotype 4A (strain DSM 15465 / Z2491).